The chain runs to 239 residues: Sensory rhodopsin-1 (239 aa).

At 1 to 3 (MDA) the chain is on the extracellular side. A helical transmembrane segment spans residues 4–25 (VATAYLGGAVALIVGVAFVWLL). At 26-34 (YRSLDGSPH) the chain is on the cytoplasmic side. Residues 35-56 (QSALAPLAIIPVFAGLSYVGMA) form a helical membrane-spanning segment. At 57–70 (YDIGTVIVNGNQIV) the chain is on the extracellular side. The helical transmembrane segment at 71 to 92 (GLRYIDWLVTTPILVGYVGYAA) threads the bilayer. The Cytoplasmic segment spans residues 93–95 (GAS). Residues 96–118 (RRSIIGVMVADALMIAVGAGAVV) traverse the membrane as a helical segment. Topologically, residues 119 to 122 (TDGT) are extracellular. Residues 123–150 (LKWALFGVSSIFHLSLFAYLYVIFPRVV) traverse the membrane as a helical segment. At 151 to 153 (PDV) the chain is on the cytoplasmic side. Residues 154–181 (PEQIGLFNLLKNHIGLLWLAYPLVWLFG) form a helical membrane-spanning segment. At 182-189 (PAGIGEAT) the chain is on the extracellular side. Residues 190–222 (AAGVALTYVFLDVLAKVPYVYFFYARRRVFMHS) traverse the membrane as a helical segment. An N6-(retinylidene)lysine modification is found at Lys-205. At 223–239 (ESPPAPEQATVEATAAD) the chain is on the cytoplasmic side.

Belongs to the archaeal/bacterial/fungal opsin family. As to quaternary structure, interacts with HTR-I.

The protein resides in the cell membrane. Involved in the control of phototaxis. Mediates both photoattractant (in the orange light) and photophobic (in the near UV light) responses. The signal is then transmitted to the sensory rhodopsin I transducer (HTR-I). This chain is Sensory rhodopsin-1 (sopI), found in Halobacterium salinarum (strain ATCC 29341 / DSM 671 / R1).